The sequence spans 28 residues: Phospholipase A2 pseudexin C chain (28 aa).

Position 28 (tyrosine 28) interacts with Ca(2+).

It belongs to the phospholipase A2 family. Group I subfamily. It depends on Ca(2+) as a cofactor. Expressed by the venom gland.

The protein resides in the secreted. The catalysed reaction is a 1,2-diacyl-sn-glycero-3-phosphocholine + H2O = a 1-acyl-sn-glycero-3-phosphocholine + a fatty acid + H(+). In terms of biological role, PLA2 catalyzes the calcium-dependent hydrolysis of the 2-acyl groups in 3-sn-phosphoglycerides. The protein is Phospholipase A2 pseudexin C chain of Pseudechis porphyriacus (Red-bellied black snake).